The following is a 387-amino-acid chain: Arrestin-C (387 aa).

Belongs to the arrestin family. In terms of tissue distribution, retina and pineal gland.

Functionally, may play a role in an as yet undefined retina-specific signal transduction. Could bind to photoactivated-phosphorylated red/green opsins. This Xenopus laevis (African clawed frog) protein is Arrestin-C (arr3).